The chain runs to 309 residues: uncharacterized protein (309 aa).

Residues 23–43 (ALVLSSIVNILLLLLIYSTVF) form a helical membrane-spanning segment.

This sequence belongs to the chlamydial CPn_0593/CT_474/TC_0759 family.

It localises to the membrane. This is an uncharacterized protein from Chlamydia trachomatis serovar D (strain ATCC VR-885 / DSM 19411 / UW-3/Cx).